Here is a 710-residue protein sequence, read N- to C-terminus: Ribonuclease R (710 aa).

Residues 246 to 573 (RKDLRDKVIV…VHRLLKLYLE (328 aa)) enclose the RNB domain. Residues 625–705 (GEVFNVVVTN…IRGEIDFVLV (81 aa)) enclose the S1 motif domain.

Belongs to the RNR ribonuclease family. RNase R subfamily.

The protein localises to the cytoplasm. The catalysed reaction is Exonucleolytic cleavage in the 3'- to 5'-direction to yield nucleoside 5'-phosphates.. Functionally, 3'-5' exoribonuclease that releases 5'-nucleoside monophosphates and is involved in maturation of structured RNAs. The sequence is that of Ribonuclease R from Thermotoga maritima (strain ATCC 43589 / DSM 3109 / JCM 10099 / NBRC 100826 / MSB8).